Here is a 78-residue protein sequence, read N- to C-terminus: Apolipoprotein C-I (78 aa).

The first 26 residues, 1-26 (MRLILCLPVLVVVLLMVLEGPAPAQG), serve as a signal peptide directing secretion.

It belongs to the apolipoprotein C1 family.

It is found in the secreted. Functionally, inhibitor of lipoprotein binding to the low density lipoprotein (LDL) receptor, LDL receptor-related protein, and very low density lipoprotein (VLDL) receptor. Associates with high density lipoproteins (HDL) and the triacylglycerol-rich lipoproteins in the plasma and makes up about 10% of the protein of the VLDL and 2% of that of HDL. Appears to interfere directly with fatty acid uptake and is also the major plasma inhibitor of cholesteryl ester transfer protein (CETP). Binds free fatty acids and reduces their intracellular esterification. Modulates the interaction of APOE with beta-migrating VLDL and inhibits binding of beta-VLDL to the LDL receptor-related protein. This chain is Apolipoprotein C-I (APOC1), found in Acinonyx jubatus (Cheetah).